Reading from the N-terminus, the 133-residue chain is Small ribosomal subunit protein bS6 (133 aa).

The segment covering 106–125 has biased composition (basic and acidic residues); that stretch reads REERVERAPRAPRPEVKAEP. A disordered region spans residues 106–133; sequence REERVERAPRAPRPEVKAEPEAEATAEA.

It belongs to the bacterial ribosomal protein bS6 family.

Functionally, binds together with bS18 to 16S ribosomal RNA. This Psychromonas ingrahamii (strain DSM 17664 / CCUG 51855 / 37) protein is Small ribosomal subunit protein bS6.